The sequence spans 151 residues: Deoxyuridine 5'-triphosphate nucleotidohydrolase (151 aa).

Residues 70–72 (RSG), asparagine 83, 87–89 (LID), and methionine 97 each bind substrate.

Belongs to the dUTPase family. It depends on Mg(2+) as a cofactor.

It carries out the reaction dUTP + H2O = dUMP + diphosphate + H(+). It functions in the pathway pyrimidine metabolism; dUMP biosynthesis; dUMP from dCTP (dUTP route): step 2/2. Functionally, this enzyme is involved in nucleotide metabolism: it produces dUMP, the immediate precursor of thymidine nucleotides and it decreases the intracellular concentration of dUTP so that uracil cannot be incorporated into DNA. This Mannheimia succiniciproducens (strain KCTC 0769BP / MBEL55E) protein is Deoxyuridine 5'-triphosphate nucleotidohydrolase.